The sequence spans 167 residues: MANIEKKNHNDLQEKLITVNRVSKTVKGGRIFSFTALTVVGNGDGKVGFGYGKAREVPAAIQKAMEQARRNMITIPLVNKTLQHSLKGSHTGSNVFMKPASDGTGIIAGGAMRAVLEVAGIHNVLAKTYGSTNPINVVRATMNGLVNMKSPEMIAAKRNKRIKDILG.

Residues 12–75 (LQEKLITVNR…EQARRNMITI (64 aa)) form the S5 DRBM domain.

This sequence belongs to the universal ribosomal protein uS5 family. As to quaternary structure, part of the 30S ribosomal subunit. Contacts proteins S4 and S8.

Functionally, with S4 and S12 plays an important role in translational accuracy. Its function is as follows. Located at the back of the 30S subunit body where it stabilizes the conformation of the head with respect to the body. This chain is Small ribosomal subunit protein uS5, found in Buchnera aphidicola subsp. Acyrthosiphon pisum (strain APS) (Acyrthosiphon pisum symbiotic bacterium).